The sequence spans 228 residues: Sec-independent protein translocase protein TatB (228 aa).

Residues 1 to 21 form a helical membrane-spanning segment; it reads MFDFGLGELVFVGIIALIVLG. 2 disordered regions span residues 109–162 and 197–228; these read DFGV…AETD and PHTTSLRKQAISRKRDFRPKHRAKPKLRVRKS. Positions 206-228 are enriched in basic residues; sequence AISRKRDFRPKHRAKPKLRVRKS.

Belongs to the TatB family. The Tat system comprises two distinct complexes: a TatABC complex, containing multiple copies of TatA, TatB and TatC subunits, and a separate TatA complex, containing only TatA subunits. Substrates initially bind to the TatABC complex, which probably triggers association of the separate TatA complex to form the active translocon.

Its subcellular location is the cell inner membrane. Its function is as follows. Part of the twin-arginine translocation (Tat) system that transports large folded proteins containing a characteristic twin-arginine motif in their signal peptide across membranes. Together with TatC, TatB is part of a receptor directly interacting with Tat signal peptides. TatB may form an oligomeric binding site that transiently accommodates folded Tat precursor proteins before their translocation. The polypeptide is Sec-independent protein translocase protein TatB (Neisseria meningitidis serogroup B (strain ATCC BAA-335 / MC58)).